A 166-amino-acid polypeptide reads, in one-letter code: Mitochondrial fission process protein 1 (166 aa).

3 consecutive transmembrane segments (helical) span residues 33–53 (SLVK…YVAA), 78–98 (AIAA…IPGF), and 125–145 (TVTC…DSFV).

The protein belongs to the MTFP1 family.

It is found in the mitochondrion inner membrane. Its function is as follows. Involved in the mitochondrial division probably by regulating membrane fission. Loss-of-function leads to apoptosis. This is Mitochondrial fission process protein 1 (mtp-18) from Caenorhabditis elegans.